Here is a 273-residue protein sequence, read N- to C-terminus: MMSMDEMRGNYDSNSYKSADHDCHKDCGRVIESQTLPLCEGTNITPTAVTTPVVAKIPVVLAEKEVQIDVEARMKLKEKFFEIKRIKKDVFLTQCELLPRAGVIENGVPITGKLFLSGFVRKNIEFATADCVKHDVVSGEIKHTTEKIPFTCVTEVTYITPPILGNRGIQQKTDLFCGRCDCECECEEERLGKLTCEEFLEDSITLVEKPFCELLGARIFEADIQRKPCYEHGEKVFDELLEKMVVHIRVKVLQLQQVAVNDTDAGTGSMCRK.

It is found in the spore wall. This is Exosporium protein C from Clostridium sporogenes (strain ATCC 15579).